A 194-amino-acid polypeptide reads, in one-letter code: Imidazoleglycerol-phosphate dehydratase (194 aa).

This sequence belongs to the imidazoleglycerol-phosphate dehydratase family.

Its subcellular location is the cytoplasm. It carries out the reaction D-erythro-1-(imidazol-4-yl)glycerol 3-phosphate = 3-(imidazol-4-yl)-2-oxopropyl phosphate + H2O. It functions in the pathway amino-acid biosynthesis; L-histidine biosynthesis; L-histidine from 5-phospho-alpha-D-ribose 1-diphosphate: step 6/9. The protein is Imidazoleglycerol-phosphate dehydratase of Caldanaerobacter subterraneus subsp. tengcongensis (strain DSM 15242 / JCM 11007 / NBRC 100824 / MB4) (Thermoanaerobacter tengcongensis).